The chain runs to 1049 residues: Ataxin-2-like protein (1049 aa).

An N-acetylmethionine modification is found at methionine 1. A disordered region spans residues 1 to 54 (MLKPQPPQQTSQPQQPPPTQQAVARRSPGGTSPPNGGLPGPLTATAAPPGPPAA). Serine 27 is subject to Phosphoserine. Phosphothreonine is present on threonine 45. Residues 96–119 (SVRGQTTGKGPPQSPVFEGVYNNS) form an interaction with MPL region. Position 109 is a phosphoserine (serine 109). Tyrosine 116 carries the phosphotyrosine modification. A Sm domain is found at 120–197 (RMLHFLTAVV…VLLVHFRNVD (78 aa)). Position 205 is an N6-acetyllysine (lysine 205). The residue at position 236 (serine 236) is a Phosphoserine. Position 262 is a phosphotyrosine (tyrosine 262). Serine 304 is subject to Phosphoserine. A Phosphotyrosine modification is found at tyrosine 307. Over residues 314–326 (ENDDGRTEEEKHS) the composition is skewed to basic and acidic residues. Disordered stretches follow at residues 314-522 (ENDD…RNLE), 554-573 (QFKL…FPSR), 578-704 (EAKG…LTAG), 736-772 (VSNS…PMMQ), 824-852 (SNPR…AEQP), 868-944 (HATQ…SSFP), and 999-1049 (PQGH…PPGN). The span at 328 to 340 (VQRQGSGRESPSL) shows a compositional bias: polar residues. Serine 333 and serine 337 each carry phosphoserine. Residue lysine 346 forms a Glycyl lysine isopeptide (Lys-Gly) (interchain with G-Cter in SUMO2) linkage. Phosphotyrosine is present on tyrosine 347. Residue arginine 359 is modified to Asymmetric dimethylarginine. Low complexity predominate over residues 361-378 (GVRCSSSRGGRPGLSSLP). Serine 389, serine 407, and serine 453 each carry phosphoserine. The span at 454–466 (PKSAAPAPVSASC) shows a compositional bias: low complexity. Positions 475-487 (VASSASIPVTSSV) are enriched in polar residues. Phosphoserine occurs at positions 496 and 499. The span at 508 to 519 (DVKELPTKEPSR) shows a compositional bias: basic and acidic residues. Residues serine 560, serine 561, and serine 562 each carry the phosphoserine modification. Basic and acidic residues predominate over residues 578–587 (EAKGKEKEVD). Serine 597 is modified (phosphoserine). Threonine 635 carries the phosphothreonine modification. Phosphoserine occurs at positions 637, 677, 683, and 687. A compositionally biased stretch (low complexity) spans 681-697 (STSTPTSPGPRTHSTPS). Composition is skewed to polar residues over residues 824-845 (SNPR…STPQ) and 878-902 (QPAT…QHQA). Over residues 935 to 944 (SAQSPQSSFP) the composition is skewed to low complexity. Over residues 1033–1042 (QVQSHPSQQL) the composition is skewed to polar residues.

It belongs to the ataxin-2 family. In terms of assembly, interacts with MPL/TPOR and EPOR and dissociates after ligand stimulation. Interacts with DDX6, G3BP, and ATXN2. Interacts with PRMT1. Interacts with CIC and ATXN1. In terms of processing, thrombopoietin triggers the phosphorylation on tyrosine residues in a way that is dependent on MPL C-terminal domain. Asymmetrically dimethylated. Probably methylated by PRMT1. Expressed in cerebellum.

It is found in the membrane. It localises to the cytoplasm. Its subcellular location is the nucleus speckle. The protein resides in the cytoplasmic granule. Functionally, involved in the regulation of stress granule and P-body formation. The polypeptide is Ataxin-2-like protein (Atxn2l) (Mus musculus (Mouse)).